The sequence spans 52 residues: Venom peptide 4b (52 aa).

An N-terminal signal peptide occupies residues 1–23 (MRSAILLVIVAIVAILGFLGVNA). AXPX repeat units follow at residues 23–26 (AEPL), 31–34 (AEPN), and 39–42 (AAPL). Residues 24 to 41 (EPLPSPLAEPNPHAKAAP) constitute a propeptide that is removed on maturation. The disordered stretch occupies residues 30–52 (LAEPNPHAKAAPLSPAAMASLAG). Over residues 37-52 (AKAAPLSPAAMASLAG) the composition is skewed to low complexity. Alanine amide is present on A51.

In terms of tissue distribution, expressed by the venom gland.

Its subcellular location is the secreted. In Eumenes pomiformis (Potter wasp), this protein is Venom peptide 4b.